Consider the following 358-residue polypeptide: Aromatic amino acid aminotransferase (358 aa).

K214 is modified (N6-(pyridoxal phosphate)lysine).

The protein belongs to the class-II pyridoxal-phosphate-dependent aminotransferase family. As to quaternary structure, homodimer. Requires pyridoxal 5'-phosphate as cofactor.

The enzyme catalyses an aromatic L-alpha-amino acid + 2-oxoglutarate = an aromatic oxo-acid + L-glutamate. Aminotransferase that catalyzes the conversion of aromatic amino acids and 2-oxoglutarate into corresponding aromatic oxo acids and L-glutamate. The protein is Aromatic amino acid aminotransferase of Rhodococcus jostii (strain RHA1).